A 163-amino-acid chain; its full sequence is Peptidyl-prolyl cis-trans isomerase (163 aa).

Residues 5-162 (YFDVSSNGKP…SVLKIEDCGT (158 aa)) form the PPIase cyclophilin-type domain.

This sequence belongs to the cyclophilin-type PPIase family. PPIase A subfamily.

The protein localises to the cytoplasm. The enzyme catalyses [protein]-peptidylproline (omega=180) = [protein]-peptidylproline (omega=0). With respect to regulation, binds cyclosporin A (CsA). CsA mediates some of its effects via an inhibitory action on PPIase. Functionally, PPIases accelerate the folding of proteins. It catalyzes the cis-trans isomerization of proline imidic peptide bonds in oligopeptides. This is Peptidyl-prolyl cis-trans isomerase (PIG28) from Uromyces fabae (Rust fungus).